A 58-amino-acid polypeptide reads, in one-letter code: DNA-directed RNA polymerases I, II, and III subunit RPABC4 (58 aa).

Residues Cys19, Cys22, Cys36, and Cys39 each contribute to the Zn(2+) site. A C4-type zinc finger spans residues 19-39 (CGECHTENEIKSRDPIRCREC).

It belongs to the archaeal Rpo12/eukaryotic RPC10 RNA polymerase subunit family. In terms of assembly, component of the RNA polymerase I (Pol I), RNA polymerase II (Pol II) and RNA polymerase III (Pol III) complexes consisting of at least 13, 12 and 17 subunits, respectively. Pol I complex consists of a ten-subunit catalytic core composed of POLR1A/RPA1, POLR1B/RPA2, POLR1C/RPAC1, POLR1D/RPAC2, POLR1H/RPA12, POLR2E/RPABC1, POLR2F/RPABC2, POLR2H/RPABC3, POLR2K/RPABC4 and POLR2L/RPABC5; a mobile stalk subunit POLR1F/RPA43 protruding from the core and additional subunits homologous to general transcription factors POLR1E/RPA49 and POLR1G/RPA34. Part of Pol I pre-initiation complex (PIC), in which Pol I core assembles with RRN3 and promoter-bound UTBF and SL1/TIF-IB complex. Pol II complex contains a ten-subunit catalytic core composed of POLR2A/RPB1, POLR2B/RPB2, POLR2C/RPB3, POLR2I/RPB9, POLR2J/RPB11, POLR2E/RPABC1, POLR2F/RPABC2, POLR2H/RPABC3, POLR2K/RPABC4 and POLR2L/RPABC5 and a mobile stalk composed of two subunits POLR2D/RPB4 and POLR2G/RPB7. Part of Pol II(G) complex, in which Pol II core associates with an additional subunit POLR2M; unlike conventional Pol II, Pol II(G) functions as a transcriptional repressor. Part of TBP-based Pol II pre-initiation complex (PIC), in which Pol II core assembles with general transcription factors and other specific initiation factors including GTF2E1, GTF2E2, GTF2F1, GTF2F2, TCEA1, ERCC2, ERCC3, GTF2H2, GTF2H3, GTF2H4, GTF2H5, GTF2A1, GTF2A2, GTF2B and TBP; this large multi-subunit PIC complex mediates DNA unwinding and targets Pol II core to the transcription start site where the first phosphodiester bond forms. Pol III complex consists of a ten-subunit catalytic core composed of POLR3A/RPC1, POLR3B/RPC2, POLR1C/RPAC1, POLR1D/RPAC2, POLR3K/RPC10, POLR2E/RPABC1, POLR2F/RPABC2, POLR2H/RPABC3, POLR2K/RPABC4 and POLR2L/RPABC5; a mobile stalk composed of two subunits POLR3H/RPC8 and CRCP/RPC9, protruding from the core and functioning primarily in transcription initiation; and additional subunits homologous to general transcription factors of the RNA polymerase II machinery, POLR3C/RPC3-POLR3F/RPC6-POLR3G/RPC7 heterotrimer required for transcription initiation and POLR3D/RPC4-POLR3E/RPC5 heterodimer involved in both transcription initiation and termination.

The protein localises to the nucleus. The protein resides in the nucleolus. Functionally, DNA-dependent RNA polymerase catalyzes the transcription of DNA into RNA using the four ribonucleoside triphosphates as substrates. Common component of RNA polymerases I, II and III which synthesize ribosomal RNA precursors, mRNA precursors and many functional non-coding RNAs, and a small RNAs, such as 5S rRNA and tRNAs, respectively. The polypeptide is DNA-directed RNA polymerases I, II, and III subunit RPABC4 (Polr2k) (Mus musculus (Mouse)).